Reading from the N-terminus, the 675-residue chain is Probable potassium transport system protein Kup (675 aa).

A compositionally biased stretch (basic and acidic residues) spans 1-12; that stretch reads MEPAMPEHDGDH. The segment at 1 to 25 is disordered; sequence MEPAMPEHDGDHASNPPHGVGIPND. The next 12 membrane-spanning stretches (helical) occupy residues 62 to 82, 104 to 124, 153 to 173, 195 to 215, 222 to 242, 255 to 275, 300 to 320, 332 to 352, 390 to 410, 419 to 439, 450 to 470, and 472 to 492; these read ALLA…LYAL, LASL…VILI, WLFG…SIIT, IIIP…VLGT, FGPI…KGIF, FALE…GSVV, WLFF…ALLI, LLVP…ATVI, IYLP…VLAF, AYGI…MVVF, VAIV…ANVL, and IPDG…IMTT.

It belongs to the HAK/KUP transporter (TC 2.A.72) family.

It localises to the cell inner membrane. It catalyses the reaction K(+)(in) + H(+)(in) = K(+)(out) + H(+)(out). Transport of potassium into the cell. Likely operates as a K(+):H(+) symporter. This is Probable potassium transport system protein Kup from Gluconobacter oxydans (strain 621H) (Gluconobacter suboxydans).